Consider the following 604-residue polypeptide: Elongation factor 4 (604 aa).

Residues 7–189 (SKIRNFCIIA…SIVHLVPPPS (183 aa)) form the tr-type G domain. Residues 19–24 (DHGKST) and 136–139 (NKID) each bind GTP.

This sequence belongs to the TRAFAC class translation factor GTPase superfamily. Classic translation factor GTPase family. LepA subfamily.

It is found in the cell inner membrane. The enzyme catalyses GTP + H2O = GDP + phosphate + H(+). Its function is as follows. Required for accurate and efficient protein synthesis under certain stress conditions. May act as a fidelity factor of the translation reaction, by catalyzing a one-codon backward translocation of tRNAs on improperly translocated ribosomes. Back-translocation proceeds from a post-translocation (POST) complex to a pre-translocation (PRE) complex, thus giving elongation factor G a second chance to translocate the tRNAs correctly. Binds to ribosomes in a GTP-dependent manner. The protein is Elongation factor 4 of Synechococcus sp. (strain ATCC 27144 / PCC 6301 / SAUG 1402/1) (Anacystis nidulans).